Consider the following 39-residue polypeptide: Photosystem II reaction center protein L (39 aa).

A helical membrane pass occupies residues S18–F38.

It belongs to the PsbL family. PSII is composed of 1 copy each of membrane proteins PsbA, PsbB, PsbC, PsbD, PsbE, PsbF, PsbH, PsbI, PsbJ, PsbK, PsbL, PsbM, PsbT, PsbX, PsbY, Psb30/Ycf12, peripheral proteins PsbO, CyanoQ (PsbQ), PsbU, PsbV and a large number of cofactors. It forms dimeric complexes.

The protein localises to the cellular thylakoid membrane. One of the components of the core complex of photosystem II (PSII). PSII is a light-driven water:plastoquinone oxidoreductase that uses light energy to abstract electrons from H(2)O, generating O(2) and a proton gradient subsequently used for ATP formation. It consists of a core antenna complex that captures photons, and an electron transfer chain that converts photonic excitation into a charge separation. This subunit is found at the monomer-monomer interface and is required for correct PSII assembly and/or dimerization. This Prochlorococcus marinus (strain MIT 9515) protein is Photosystem II reaction center protein L.